The primary structure comprises 96 residues: Keratin-associated protein 12-1 (96 aa).

14 consecutive repeat copies span residues 10 to 14 (CQPAC), 15 to 19 (CAPSP), 24 to 28 (CYIPV), 30 to 34 (CQSSV), 35 to 39 (CVPVS), 45 to 49 (CVPVR), 50 to 54 (CQSSV), 55 to 59 (CVPVS), 60 to 64 (CRPVV), 70 to 74 (CQSSG), 75 to 79 (CCQPS), 80 to 84 (CTSVL), 85 to 89 (CRPIS), and 90 to 94 (CSTPS). A 14 X 5 AA approximate repeats region spans residues 10 to 94 (CQPACCAPSP…CRPISCSTPS (85 aa)).

The protein belongs to the KRTAP type 12 family. As to quaternary structure, interacts with hair keratins. Restricted to a narrow region of the hair fiber cuticle, lying approximately 20 cell layers above the apex of the dermal papilla of the hair root; not detected in any other tissues.

Functionally, in the hair cortex, hair keratin intermediate filaments are embedded in an interfilamentous matrix, consisting of hair keratin-associated proteins (KRTAP), which are essential for the formation of a rigid and resistant hair shaft through their extensive disulfide bond cross-linking with abundant cysteine residues of hair keratins. The matrix proteins include the high-sulfur and high-glycine-tyrosine keratins. This chain is Keratin-associated protein 12-1 (KRTAP12-1), found in Homo sapiens (Human).